The following is a 218-amino-acid chain: Ribosomal RNA large subunit methyltransferase E (218 aa).

5 residues coordinate S-adenosyl-L-methionine: Gly-64, Trp-66, Asp-92, Asp-108, and Asp-133. The active-site Proton acceptor is Lys-173.

Belongs to the class I-like SAM-binding methyltransferase superfamily. RNA methyltransferase RlmE family.

It is found in the cytoplasm. It carries out the reaction uridine(2552) in 23S rRNA + S-adenosyl-L-methionine = 2'-O-methyluridine(2552) in 23S rRNA + S-adenosyl-L-homocysteine + H(+). Specifically methylates the uridine in position 2552 of 23S rRNA at the 2'-O position of the ribose in the fully assembled 50S ribosomal subunit. In Paracidovorax citrulli (strain AAC00-1) (Acidovorax citrulli), this protein is Ribosomal RNA large subunit methyltransferase E.